The following is a 400-amino-acid chain: CinA-like protein (400 aa).

The protein belongs to the CinA family.

This chain is CinA-like protein, found in Escherichia coli (strain 55989 / EAEC).